Reading from the N-terminus, the 228-residue chain is MYRYTWLLWWITILLRIQQFYQWWKPDTTSCIQKTGYEGQNLSLPPSNALSSKDYTFSWYKDSLKALNMLCYYTEKLEEIDSKPDTIRRCFLNHTLFLINLTSHYSGIYYFDSLYTYGWVLRTPLCYNVTVYSIYQTHIHTTILLYPPTSTYNSLTISSFTSTNLTHTAVHYAAGNVEAQHDTATPHTMWIIPLVIVTTIIVLICFKFPQKAWNKFTQYRYNSMLTAA.

The N-terminal stretch at 1 to 19 is a signal peptide; it reads MYRYTWLLWWITILLRIQQ. Asparagine 41, asparagine 93, asparagine 100, asparagine 128, and asparagine 164 each carry an N-linked (GlcNAc...) asparagine; by host glycan. A helical membrane pass occupies residues 189–209; sequence MWIIPLVIVTTIIVLICFKFP.

This sequence belongs to the HHV-5 UL9 family.

It localises to the host membrane. This is an uncharacterized protein from Homo sapiens (Human).